The sequence spans 361 residues: Phosphoserine aminotransferase (361 aa).

R43 is a binding site for L-glutamate. Pyridoxal 5'-phosphate contacts are provided by residues A77–S78, W103, T153, D173, and Q196. At K197 the chain carries N6-(pyridoxal phosphate)lysine. N238–T239 is a binding site for pyridoxal 5'-phosphate.

The protein belongs to the class-V pyridoxal-phosphate-dependent aminotransferase family. SerC subfamily. In terms of assembly, homodimer. Pyridoxal 5'-phosphate serves as cofactor.

Its subcellular location is the cytoplasm. The catalysed reaction is O-phospho-L-serine + 2-oxoglutarate = 3-phosphooxypyruvate + L-glutamate. It carries out the reaction 4-(phosphooxy)-L-threonine + 2-oxoglutarate = (R)-3-hydroxy-2-oxo-4-phosphooxybutanoate + L-glutamate. Its pathway is amino-acid biosynthesis; L-serine biosynthesis; L-serine from 3-phospho-D-glycerate: step 2/3. It functions in the pathway cofactor biosynthesis; pyridoxine 5'-phosphate biosynthesis; pyridoxine 5'-phosphate from D-erythrose 4-phosphate: step 3/5. Functionally, catalyzes the reversible conversion of 3-phosphohydroxypyruvate to phosphoserine and of 3-hydroxy-2-oxo-4-phosphonooxybutanoate to phosphohydroxythreonine. The protein is Phosphoserine aminotransferase of Pseudomonas entomophila (strain L48).